Consider the following 448-residue polypeptide: Hyaluronidase conohyal-Cn1 (448 aa).

Positions 1–18 (MRAVVVVTGLVVVVVATA) are cleaved as a signal peptide. Positions 19–33 (LSLPNHDVKSATSSR) are excised as a propeptide. The segment at 26–55 (VKSATSSRSSSDYQGSSGDDCDEGLPPPDQ) is disordered. A compositionally biased stretch (low complexity) spans 31 to 43 (SSRSSSDYQGSSG). A disulfide bridge links C67 with C344. The N-linked (GlcNAc...) asparagine glycan is linked to N141. The active-site Proton donor is the E151. N-linked (GlcNAc...) asparagine glycosylation is found at N169 and N361. Intrachain disulfides connect C369-C380, C374-C413, and C415-C424. The 12-residue stretch at 413-424 (CRCYSAWEGACC) folds into the EGF-like domain.

It belongs to the glycosyl hydrolase 56 family. As to expression, expressed by the venom duct.

It is found in the secreted. It catalyses the reaction Random hydrolysis of (1-&gt;4)-linkages between N-acetyl-beta-D-glucosamine and D-glucuronate residues in hyaluronate.. Functionally, hyaluronidase catalyzes the hydrolysis of hyaluronic acid (HA), an anionic, nonsulfated glycosaminoglycan distributed widely throughout connective, epithelial, and neural tissues. In venom, they are known to enhance diffusion of the venom by degrading the extracellular matrix. This Conus consors (Singed cone) protein is Hyaluronidase conohyal-Cn1.